The primary structure comprises 234 residues: Ammonia monooxygenase gamma subunit (234 aa).

Residues 1–20 form the signal peptide; sequence MRMIKFLLLAILLAPFVAHS. Positions 38–193 constitute a Cytochrome c domain; that stretch reads ESLQRGAKGF…RFVADLVNYM (156 aa). Heme c contacts are provided by cysteine 51, cysteine 54, and histidine 55. Residues 206-226 form a helical membrane-spanning segment; sequence ELGITVLLFLFGMLGLTYLLK.

Belongs to the cytochrome c family. The soluble ammonia monooxygenase is a nonamer composed of three alpha subunits (AmoA), three beta subunits (AmoB) and three gamma subunits (Cytochrome c1 PetC). The cofactor is heme c.

It is found in the cell membrane. Its subcellular location is the cytoplasm. Part of the ammonia monooxygenase complex, which catalyzes the oxidation of ammonia to hydroxylamine, the first reaction in the process of ammonia oxidation to nitrite. This is Ammonia monooxygenase gamma subunit from Nitrosomonas europaea (strain ATCC 19718 / CIP 103999 / KCTC 2705 / NBRC 14298).